A 498-amino-acid polypeptide reads, in one-letter code: Archaemetzincin-1 (498 aa).

His261 is a binding site for Zn(2+). Catalysis depends on Glu262, which acts as the Proton acceptor. Residues His265, Cys272, Cys277, Cys296, and Cys299 each contribute to the Zn(2+) site. The interval 332-381 (QEAGEPSVWEDTPPASADSGMCCESDSEPGTSVSEPLTPDAGSHTFASGP) is disordered.

Belongs to the peptidase M54 family. It depends on Zn(2+) as a cofactor.

Its function is as follows. Probable zinc metalloprotease. The protein is Archaemetzincin-1 (AMZ1) of Homo sapiens (Human).